The chain runs to 570 residues: Protein FAM227A (570 aa).

The span at 87–99 (LREKTRSSPEDKV) shows a compositional bias: basic and acidic residues. 3 disordered regions span residues 87–112 (LREKTRSSPEDKVKRQRKSQYSCKGS), 336–374 (PAQSRKFYHPQSSSANSPSEKTSSAKQNSEKSLRMQNTA), and 519–570 (KAAD…TSKP). Position 343 is a phosphotyrosine (Tyr-343). Positions 345–362 (PQSSSANSPSEKTSSAKQ) are enriched in polar residues. A phosphoserine mark is found at Ser-348 and Ser-349. Composition is skewed to basic and acidic residues over residues 363-374 (NSEKSLRMQNTA) and 540-562 (SPDKKTKEGKGGEGKRRETEVEH).

Belongs to the FAM227 family.

This is Protein FAM227A (FAM227A) from Homo sapiens (Human).